The following is a 573-amino-acid chain: Methionine--tRNA ligase (573 aa).

The short motif at 11–21 (PYINGIKHLGN) is the 'HIGH' region element. Cysteine 143, cysteine 146, cysteine 156, and cysteine 159 together coordinate Zn(2+). Residues 346–350 (QFSTS) carry the 'KMSKS' region motif. An ATP-binding site is contributed by threonine 349.

This sequence belongs to the class-I aminoacyl-tRNA synthetase family. MetG type 1 subfamily. In terms of assembly, monomer. Zn(2+) serves as cofactor.

It localises to the cytoplasm. The enzyme catalyses tRNA(Met) + L-methionine + ATP = L-methionyl-tRNA(Met) + AMP + diphosphate. Is required not only for elongation of protein synthesis but also for the initiation of all mRNA translation through initiator tRNA(fMet) aminoacylation. The protein is Methionine--tRNA ligase of Ruegeria sp. (strain TM1040) (Silicibacter sp.).